Reading from the N-terminus, the 71-residue chain is Small ribosomal subunit protein bS21 (71 aa).

It belongs to the bacterial ribosomal protein bS21 family.

The chain is Small ribosomal subunit protein bS21 from Psychromonas ingrahamii (strain DSM 17664 / CCUG 51855 / 37).